Reading from the N-terminus, the 189-residue chain is Peptidyl-tRNA hydrolase (189 aa).

A tRNA-binding site is contributed by Y15. The active-site Proton acceptor is H20. F66, N68, and N114 together coordinate tRNA.

This sequence belongs to the PTH family. As to quaternary structure, monomer.

It localises to the cytoplasm. The enzyme catalyses an N-acyl-L-alpha-aminoacyl-tRNA + H2O = an N-acyl-L-amino acid + a tRNA + H(+). Functionally, hydrolyzes ribosome-free peptidyl-tRNAs (with 1 or more amino acids incorporated), which drop off the ribosome during protein synthesis, or as a result of ribosome stalling. In terms of biological role, catalyzes the release of premature peptidyl moieties from peptidyl-tRNA molecules trapped in stalled 50S ribosomal subunits, and thus maintains levels of free tRNAs and 50S ribosomes. This Streptococcus gordonii (strain Challis / ATCC 35105 / BCRC 15272 / CH1 / DL1 / V288) protein is Peptidyl-tRNA hydrolase.